The primary structure comprises 76 residues: Protein MATERNALLY EXPRESSED GENE 4 (76 aa).

The signal sequence occupies residues 1–27; that stretch reads MEYRKRVDALVFFSLLLLGYFAAHAHG. A disulfide bridge links Cys-53 with Cys-75.

This sequence belongs to the MEG family. As to expression, expressed exclusively in endosperm.

This Zea mays (Maize) protein is Protein MATERNALLY EXPRESSED GENE 4 (MEG4).